Here is a 295-residue protein sequence, read N- to C-terminus: UDP-N-acetylenolpyruvoylglucosamine reductase (295 aa).

An FAD-binding PCMH-type domain is found at Arg-25–Arg-189. Arg-169 is a catalytic residue. Ser-218 acts as the Proton donor in catalysis. Glu-288 is an active-site residue.

It belongs to the MurB family. Requires FAD as cofactor.

The protein resides in the cytoplasm. The enzyme catalyses UDP-N-acetyl-alpha-D-muramate + NADP(+) = UDP-N-acetyl-3-O-(1-carboxyvinyl)-alpha-D-glucosamine + NADPH + H(+). It functions in the pathway cell wall biogenesis; peptidoglycan biosynthesis. Functionally, cell wall formation. This chain is UDP-N-acetylenolpyruvoylglucosamine reductase, found in Pelobacter propionicus (strain DSM 2379 / NBRC 103807 / OttBd1).